The primary structure comprises 430 residues: Serine hydroxymethyltransferase (430 aa).

Residues Leu126 and 130–132 (GHL) each bind (6S)-5,6,7,8-tetrahydrofolate. An N6-(pyridoxal phosphate)lysine modification is found at Lys235.

Belongs to the SHMT family. As to quaternary structure, homodimer. Pyridoxal 5'-phosphate is required as a cofactor.

Its subcellular location is the cytoplasm. The enzyme catalyses (6R)-5,10-methylene-5,6,7,8-tetrahydrofolate + glycine + H2O = (6S)-5,6,7,8-tetrahydrofolate + L-serine. The protein operates within one-carbon metabolism; tetrahydrofolate interconversion. It functions in the pathway amino-acid biosynthesis; glycine biosynthesis; glycine from L-serine: step 1/1. In terms of biological role, catalyzes the reversible interconversion of serine and glycine with tetrahydrofolate (THF) serving as the one-carbon carrier. This reaction serves as the major source of one-carbon groups required for the biosynthesis of purines, thymidylate, methionine, and other important biomolecules. Also exhibits THF-independent aldolase activity toward beta-hydroxyamino acids, producing glycine and aldehydes, via a retro-aldol mechanism. In Leifsonia xyli subsp. xyli (strain CTCB07), this protein is Serine hydroxymethyltransferase.